The primary structure comprises 355 residues: Ribosomal RNA large subunit methyltransferase M (355 aa).

S-adenosyl-L-methionine contacts are provided by residues S183, 216–219 (SPGG), D235, D255, and D271. K300 functions as the Proton acceptor in the catalytic mechanism.

Belongs to the class I-like SAM-binding methyltransferase superfamily. RNA methyltransferase RlmE family. RlmM subfamily. As to quaternary structure, monomer.

It localises to the cytoplasm. It carries out the reaction cytidine(2498) in 23S rRNA + S-adenosyl-L-methionine = 2'-O-methylcytidine(2498) in 23S rRNA + S-adenosyl-L-homocysteine + H(+). In terms of biological role, catalyzes the 2'-O-methylation at nucleotide C2498 in 23S rRNA. The protein is Ribosomal RNA large subunit methyltransferase M of Pseudomonas putida (strain W619).